Reading from the N-terminus, the 483-residue chain is tRNA-2-methylthio-N(6)-dimethylallyladenosine synthase (483 aa).

The 118-residue stretch at 31–148 folds into the MTTase N-terminal domain; sequence KKLYIETQGC…LPQMLDQHQD (118 aa). The [4Fe-4S] cluster site is built by cysteine 40, cysteine 77, cysteine 111, cysteine 192, cysteine 196, and cysteine 199. The 233-residue stretch at 178 to 410 folds into the Radical SAM core domain; the sequence is RVEGFKAFVS…QHWIKQSSIR (233 aa). The region spanning 413 to 477 is the TRAM domain; sequence DAMQGTIQRV…LNLVYGELLN (65 aa).

The protein belongs to the methylthiotransferase family. MiaB subfamily. As to quaternary structure, monomer. The cofactor is [4Fe-4S] cluster.

It is found in the cytoplasm. The catalysed reaction is N(6)-dimethylallyladenosine(37) in tRNA + (sulfur carrier)-SH + AH2 + 2 S-adenosyl-L-methionine = 2-methylsulfanyl-N(6)-dimethylallyladenosine(37) in tRNA + (sulfur carrier)-H + 5'-deoxyadenosine + L-methionine + A + S-adenosyl-L-homocysteine + 2 H(+). Functionally, catalyzes the methylthiolation of N6-(dimethylallyl)adenosine (i(6)A), leading to the formation of 2-methylthio-N6-(dimethylallyl)adenosine (ms(2)i(6)A) at position 37 in tRNAs that read codons beginning with uridine. The protein is tRNA-2-methylthio-N(6)-dimethylallyladenosine synthase of Acinetobacter baylyi (strain ATCC 33305 / BD413 / ADP1).